Here is a 206-residue protein sequence, read N- to C-terminus: Protein-methionine-sulfoxide reductase heme-binding subunit MsrQ (206 aa).

5 consecutive transmembrane segments (helical) span residues 13–33 (IAIW…INLG), 79–99 (LLGL…SILE), 116–136 (PYLT…LTST), 147–167 (WQKL…HYLW), and 169–189 (VKTL…LLLL).

Belongs to the MsrQ family. As to quaternary structure, heterodimer of a catalytic subunit (MsrP) and a heme-binding subunit (MsrQ). It depends on FMN as a cofactor. Requires heme b as cofactor.

Its subcellular location is the cell inner membrane. Functionally, part of the MsrPQ system that repairs oxidized periplasmic proteins containing methionine sulfoxide residues (Met-O), using respiratory chain electrons. Thus protects these proteins from oxidative-stress damage caused by reactive species of oxygen and chlorine generated by the host defense mechanisms. MsrPQ is essential for the maintenance of envelope integrity under bleach stress, rescuing a wide series of structurally unrelated periplasmic proteins from methionine oxidation. MsrQ provides electrons for reduction to the reductase catalytic subunit MsrP, using the quinone pool of the respiratory chain. In Yersinia pestis bv. Antiqua (strain Antiqua), this protein is Protein-methionine-sulfoxide reductase heme-binding subunit MsrQ.